Here is a 150-residue protein sequence, read N- to C-terminus: Monooxygenase nsrS (150 aa).

The protein belongs to the avfA family.

It participates in secondary metabolite biosynthesis. Its function is as follows. Monooxygenase; part of the gene cluster that mediates the biosynthesis of the tetrahydroxanthone dimer neosartorin, which exhibits antibacterial activity. The two different monomeric units appear to be synthesized by the same set of enzymes, among which the Baeyer-Villiger monooxygenase nsrF is the key enzyme for the divergence of the biosynthetic routes. The pathway begins with the synthesis of atrochrysone thioester by the polyketide synthase nsrB. The atrochrysone carboxyl ACP thioesterase nsrC then breaks the thioester bond and releases the atrochrysone carboxylic acid from AacuL. Atrochrysone carboxylic acid is decarboxylated by the decarboxylase nsrE, and oxidized by the anthrone oxygenase nsrD to yield emodin. Emodin is then reduced to emodin hydroquinone by the oxidoreductase nsrR. A-ring reduction by the short chain dehydrogenase nsrJ, dehydration by the scytalone dehydratase-like protein nsrI and probable spontaneous re-oxidation, results in overall deoxygenation to chrysophanol. The Baeyer-Villiger monooxygenase nsrF accepts chrysophanol as a substrate to insert one oxygen atom at two different positions to yield the precursors of both monomric units. NsrF is promiscuous/flexible in interacting with the 2 (non methylated and methylated) aromatic rings of chrysophanol, thus diverging the biosynthetic pathway at this point. After the hydrolysis of the lactones, methylesterification by the methyltransferase nsrG yields respectively moniliphenone and 2,2',6'-trihydroxy-4-methyl-6-methoxya-cyldiphenylmethanone. The next steps are the hydroxylation by the FAD-dependent monooxygenase nsrK, followed by isomerization by the monooxygenase nsrQ. The short chain dehydrogenase/reductase nsrO then catalyzes the C-5 ketoreduction to give the xanthone skeleton of blennolide C and 5-acetylblennolide A. The acetyltransferase nsrL has a strict substrate specificity and uses only blennolide A but not blennolide C to yield 5-acetylblennolide A as the single-acetylated product. In the final step of the biosynthesis, the heterodimerization of the 2 xanthones, blennolide C and 5-acetylblennolide A, is catalyzed by the cytochrome P450 monooxygenase nsrP. NsrP can utilize at least three different xanthones as its substrates to perform the dimerization reaction. This is Monooxygenase nsrS from Aspergillus novofumigatus (strain IBT 16806).